A 349-amino-acid polypeptide reads, in one-letter code: MNKEELFDVTVIGGGPAGLYSAFYSGLREMKTKIIEFQPHLGGKIHVYPEKMIWDIGGLPPITGAKLIEQLVEQGLTFQPEVVLNEKVESITRDEYGTFLLTTSSGQQHFSKTVIIATGSGILKPQKLAIEGAERFEVSNLNYTVKSLKHFKDKTVIVSGGGNSAIDWANELEPLAKKVYVTYRKEALSGHEAQITQLLNSSVTCLLNTSITKLIAGENHEAIERVELTNHETGEISYLSIDEVIINHGYERDMTLLENSELNIEMIDNYFIAGNANSESSIPGLYAAGDILKHDGKLHLIAGAFHDAGNAVNKAKQFIQPDASEYGMVSSHNDVFKKRNRELMKQMIE.

Positions 36, 44, 48, 88, 123, 290, and 331 each coordinate FAD.

This sequence belongs to the ferredoxin--NADP reductase type 2 family. As to quaternary structure, homodimer. The cofactor is FAD.

The catalysed reaction is 2 reduced [2Fe-2S]-[ferredoxin] + NADP(+) + H(+) = 2 oxidized [2Fe-2S]-[ferredoxin] + NADPH. This is Ferredoxin--NADP reductase 1 from Bacillus cytotoxicus (strain DSM 22905 / CIP 110041 / 391-98 / NVH 391-98).